The sequence spans 344 residues: Phenylalanine--tRNA ligase alpha subunit (344 aa).

Mg(2+) is bound at residue glutamate 256.

Belongs to the class-II aminoacyl-tRNA synthetase family. Phe-tRNA synthetase alpha subunit type 1 subfamily. In terms of assembly, tetramer of two alpha and two beta subunits. It depends on Mg(2+) as a cofactor.

It is found in the cytoplasm. It carries out the reaction tRNA(Phe) + L-phenylalanine + ATP = L-phenylalanyl-tRNA(Phe) + AMP + diphosphate + H(+). This is Phenylalanine--tRNA ligase alpha subunit from Geobacillus thermodenitrificans (strain NG80-2).